The sequence spans 640 residues: Chaperone protein DnaK (640 aa).

The residue at position 198 (threonine 198) is a Phosphothreonine; by autocatalysis. The interval 600 to 640 is disordered; it reads KTQGAGAEGSEQPHGEQEAGGAAKGETVVDADFEEVKDDKK. Residues 628 to 640 are compositionally biased toward acidic residues; that stretch reads VDADFEEVKDDKK.

This sequence belongs to the heat shock protein 70 family.

Acts as a chaperone. This chain is Chaperone protein DnaK, found in Geobacter sp. (strain M21).